Consider the following 208-residue polypeptide: ATP phosphoribosyltransferase (208 aa).

The protein belongs to the ATP phosphoribosyltransferase family. Short subfamily. Heteromultimer composed of HisG and HisZ subunits.

It is found in the cytoplasm. It catalyses the reaction 1-(5-phospho-beta-D-ribosyl)-ATP + diphosphate = 5-phospho-alpha-D-ribose 1-diphosphate + ATP. It participates in amino-acid biosynthesis; L-histidine biosynthesis; L-histidine from 5-phospho-alpha-D-ribose 1-diphosphate: step 1/9. In terms of biological role, catalyzes the condensation of ATP and 5-phosphoribose 1-diphosphate to form N'-(5'-phosphoribosyl)-ATP (PR-ATP). Has a crucial role in the pathway because the rate of histidine biosynthesis seems to be controlled primarily by regulation of HisG enzymatic activity. The chain is ATP phosphoribosyltransferase from Lactococcus lactis subsp. cremoris (strain MG1363).